The chain runs to 129 residues: MKKVYATGRRKASIAKVWLTPGAGTMTINGLSLDAWLGGLEAKKLRVKQPLALTKQDTSVNIVATVLGGGFGGQADALRHGISRALVRFNPELKAILKPEGMMTRDSRVVERKKPGKRKARRSRQFSKR.

Positions 104-113 (TRDSRVVERK) are enriched in basic and acidic residues. A disordered region spans residues 104-129 (TRDSRVVERKKPGKRKARRSRQFSKR). Positions 114-129 (KPGKRKARRSRQFSKR) are enriched in basic residues.

It belongs to the universal ribosomal protein uS9 family.

This is Small ribosomal subunit protein uS9 from Sulfurimonas denitrificans (strain ATCC 33889 / DSM 1251) (Thiomicrospira denitrificans (strain ATCC 33889 / DSM 1251)).